Consider the following 166-residue polypeptide: Zinc finger CCHC domain-containing protein 13 (166 aa).

The segment at 4-21 adopts a CCHC-type 1; degenerate zinc-finger fold; it reads KDFFACGHSGHWARGCPR. The segment at 45–62 adopts a CCHC-type 2; degenerate zinc-finger fold; it reads YTCYCCGESGRNAKNCVL. 4 consecutive CCHC-type zinc fingers follow at residues 65–82, 89–106, 110–127, and 128–145; these read NICY…DCKD, QHCY…DCDR, QKCY…DCAQ, and VKCY…NCSK.

This Homo sapiens (Human) protein is Zinc finger CCHC domain-containing protein 13 (ZCCHC13).